The following is a 382-amino-acid chain: MSTYTRPVMLLLCGLLLLTLAIAVLNTLVPLWLAQANLPTWQVGMVSSSYFTGNLVGTLFTGYLIKRIGFNRSYYLASLIFAAGCVGLGGMVGFWSWMSWRFIAGIGCAMIWVVVESALMCSGTSHNRGRLLAAYMMAYYMGTFLGQLLVSKVSGELLHVLPWVTGMILAGILPLLFTRIVNQQTQARHSSSISAMLKLRQARLGVNGCIISGIVLGSLYGLMPLYLKHQGMANASIGFWMAVLVSAGILGQWPMGRLADKFGRLLVLRVQVFVVILGSIAMLTQAAMAPALFILGAAGFKLYPVAMAWACEKVEHHQLVAMNQALLLSYTVGSLLGPSFAAMLMQNYSDNLLFIMIASVSFIYLLMLLRNAGQTPNPVAHI.

Transmembrane regions (helical) follow at residues 8–28, 45–65, 75–95, 102–122, 131–151, 157–177, 204–224, 231–251, 274–294, 325–345, and 349–369; these read VMLL…LNTL, MVSS…GYLI, YLAS…VGFW, FIAG…LMCS, LLAA…LLVS, LLHV…PLLF, LGVN…GLMP, GMAN…GILG, VVIL…ALFI, ALLL…AMLM, and SDNL…LMLL.

This sequence belongs to the major facilitator superfamily. YcaD (TC 2.A.1.26) family.

It localises to the cell inner membrane. This is an uncharacterized protein from Salmonella gallinarum (strain 287/91 / NCTC 13346).